Here is a 140-residue protein sequence, read N- to C-terminus: Small ribosomal subunit protein uS9 (140 aa).

The protein belongs to the universal ribosomal protein uS9 family.

The polypeptide is Small ribosomal subunit protein uS9 (Desulfurococcus amylolyticus (strain DSM 18924 / JCM 16383 / VKM B-2413 / 1221n) (Desulfurococcus kamchatkensis)).